The following is a 221-amino-acid chain: Octanoyltransferase (221 aa).

Positions 29–208 (DEIPDTCLLL…RLTEFLLPAR (180 aa)) constitute a BPL/LPL catalytic domain. Substrate-binding positions include 67-74 (RGGRITWH), 138-140 (AIG), and 151-153 (GFA). The Acyl-thioester intermediate role is filled by C169.

This sequence belongs to the LipB family.

Its subcellular location is the cytoplasm. It carries out the reaction octanoyl-[ACP] + L-lysyl-[protein] = N(6)-octanoyl-L-lysyl-[protein] + holo-[ACP] + H(+). Its pathway is protein modification; protein lipoylation via endogenous pathway; protein N(6)-(lipoyl)lysine from octanoyl-[acyl-carrier-protein]: step 1/2. Its function is as follows. Catalyzes the transfer of endogenously produced octanoic acid from octanoyl-acyl-carrier-protein onto the lipoyl domains of lipoate-dependent enzymes. Lipoyl-ACP can also act as a substrate although octanoyl-ACP is likely to be the physiological substrate. The protein is Octanoyltransferase of Acidothermus cellulolyticus (strain ATCC 43068 / DSM 8971 / 11B).